The chain runs to 502 residues: Lysine--tRNA ligase (502 aa).

Mg(2+) is bound by residues glutamate 413 and glutamate 420.

It belongs to the class-II aminoacyl-tRNA synthetase family. Homodimer. Requires Mg(2+) as cofactor.

It localises to the cytoplasm. It catalyses the reaction tRNA(Lys) + L-lysine + ATP = L-lysyl-tRNA(Lys) + AMP + diphosphate. The chain is Lysine--tRNA ligase from Haemophilus influenzae (strain PittEE).